A 109-amino-acid polypeptide reads, in one-letter code: Nascent polypeptide-associated complex protein (109 aa).

Residues 3–69 enclose the NAC-A/B domain; the sequence is PMNPKQLKKL…TEEERVVLKI (67 aa).

It belongs to the NAC-alpha family. In terms of assembly, homodimer. Interacts with the ribosome. Binds ribosomal RNA.

Functionally, contacts the emerging nascent chain on the ribosome. The polypeptide is Nascent polypeptide-associated complex protein (Pyrococcus abyssi (strain GE5 / Orsay)).